The sequence spans 313 residues: Porphobilinogen deaminase (313 aa).

Cys241 bears the S-(dipyrrolylmethanemethyl)cysteine mark.

Belongs to the HMBS family. Monomer. Dipyrromethane serves as cofactor.

The catalysed reaction is 4 porphobilinogen + H2O = hydroxymethylbilane + 4 NH4(+). Its pathway is porphyrin-containing compound metabolism; protoporphyrin-IX biosynthesis; coproporphyrinogen-III from 5-aminolevulinate: step 2/4. It participates in porphyrin-containing compound metabolism; chlorophyll biosynthesis. Tetrapolymerization of the monopyrrole PBG into the hydroxymethylbilane pre-uroporphyrinogen in several discrete steps. The sequence is that of Porphobilinogen deaminase from Chlorobium chlorochromatii (strain CaD3).